The primary structure comprises 403 residues: Probable tRNA sulfurtransferase (403 aa).

One can recognise a THUMP domain in the interval 60–165; the sequence is KLAEERLKPI…KEGVFLSCRT (106 aa). ATP-binding positions include 183 to 184, 208 to 209, arginine 265, glycine 287, and glutamine 296; these read ML and HF.

The protein belongs to the ThiI family.

Its subcellular location is the cytoplasm. The catalysed reaction is [ThiI sulfur-carrier protein]-S-sulfanyl-L-cysteine + a uridine in tRNA + 2 reduced [2Fe-2S]-[ferredoxin] + ATP + H(+) = [ThiI sulfur-carrier protein]-L-cysteine + a 4-thiouridine in tRNA + 2 oxidized [2Fe-2S]-[ferredoxin] + AMP + diphosphate. It carries out the reaction [ThiS sulfur-carrier protein]-C-terminal Gly-Gly-AMP + S-sulfanyl-L-cysteinyl-[cysteine desulfurase] + AH2 = [ThiS sulfur-carrier protein]-C-terminal-Gly-aminoethanethioate + L-cysteinyl-[cysteine desulfurase] + A + AMP + 2 H(+). It participates in cofactor biosynthesis; thiamine diphosphate biosynthesis. Functionally, catalyzes the ATP-dependent transfer of a sulfur to tRNA to produce 4-thiouridine in position 8 of tRNAs, which functions as a near-UV photosensor. Also catalyzes the transfer of sulfur to the sulfur carrier protein ThiS, forming ThiS-thiocarboxylate. This is a step in the synthesis of thiazole, in the thiamine biosynthesis pathway. The sulfur is donated as persulfide by IscS. The chain is Probable tRNA sulfurtransferase from Listeria welshimeri serovar 6b (strain ATCC 35897 / DSM 20650 / CCUG 15529 / CIP 8149 / NCTC 11857 / SLCC 5334 / V8).